Here is a 429-residue protein sequence, read N- to C-terminus: Gap junction gamma-2 protein (429 aa).

Over 1–25 (MTNMSWSFLTRLLEEIHNHSTFVGK) the chain is Cytoplasmic. The chain crosses the membrane as a helical span at residues 26-46 (VWLTVLVVFRIVLTAVGGESI). Residues 47–78 (YSDEQTKFTCNTRQPGCDNVCYDAFAPLSHVR) are Extracellular-facing. A helical membrane pass occupies residues 79-99 (FWVFQIVVISTPSVMYLGYAV). Residues 100 to 214 (HRLARASQDE…EGLMRVYVAQ (115 aa)) lie on the Cytoplasmic side of the membrane. The segment at 106-200 (SQDERRRASR…GPAGQHDGRR (95 aa)) is disordered. Over residues 112-123 (RASRRRPSRRAP) the composition is skewed to basic residues. The segment covering 124-138 (RPPLPLPPPPHPGWP) has biased composition (pro residues). The segment covering 142–173 (DLGEEEPMLGLGEEDEDPGVAEGLGEDEEAED) has biased composition (acidic residues). A helical membrane pass occupies residues 215–235 (LVARAAFEVAFLVGQYLLYGF). The Extracellular portion of the chain corresponds to 236–263 (EVRPFFACSRQPCPHVVDCFVSRPTEKT). A helical transmembrane segment spans residues 264 to 284 (VFLLVMYVVSCLCLLLNLCEM). Residues 285–429 (AHLGLGNAQD…SREGKTTVWI (145 aa)) are Cytoplasmic-facing. 2 disordered regions span residues 296–316 (VRGR…PPCA) and 361–429 (LGDL…TVWI). Residues 303-316 (PASPGPMPRPPPCA) show a composition bias toward pro residues. S366 is subject to Phosphoserine. A compositionally biased stretch (low complexity) spans 372–395 (LPANARGPPKPGAPASGSGSATSG).

The protein belongs to the connexin family. Gamma-type subfamily. A connexon is composed of a hexamer of connexins. Interacts with TJP1.

The protein resides in the cell membrane. Its subcellular location is the cell junction. It localises to the gap junction. Functionally, one gap junction consists of a cluster of closely packed pairs of transmembrane channels, the connexons, through which materials of low MW diffuse from one cell to a neighboring cell. May play a role in myelination in central and peripheral nervous systems. The chain is Gap junction gamma-2 protein (GJC2) from Bos taurus (Bovine).